Reading from the N-terminus, the 286-residue chain is Pheromone receptor transcription factor (286 aa).

At Ser2 the chain carries N-acetylserine. At Ser2 the chain carries Phosphoserine. Positions 18-72 constitute an MADS-box domain; the sequence is RRKIEIKFIENKTRRHVTFSKRKHGIMKKAFELSVLTGTQVLLLVVSETGLVYTF. Residues 97–119 show a composition bias toward acidic residues; the sequence is PDDEEEDEEEDGDDDDDDDDDGN. The interval 97 to 137 is disordered; it reads PDDEEEDEEEDGDDDDDDDDDGNDMQRQQPQQQQPQQQQQV. The segment covering 122–136 has biased composition (low complexity); sequence QRQQPQQQQPQQQQQ. Ser144 is modified (phosphoserine). Positions 167–264 are disordered; the sequence is LGGANPNQNS…QQAFANAASP (98 aa). Residues 171–246 show a composition bias toward low complexity; that stretch reads NPNQNSMIQQ…QQQQQQQQQP (76 aa).

As to quaternary structure, homodimer. Binds DNA with a high specificity in complex with mating-type protein ALPHA1. Also binds DNA with a high specificity as a heterotetramer consisting of an ALPHA2 dimer and an MCM1 dimer. Interacts with YHP1 and YOX1, possibly leading to its inactivation. Interacts with ARG80 and ARG82.

Its subcellular location is the nucleus. Transcription factor required for the efficient replication of minichromosomes and the transcriptional regulation of early cell cycle genes. Activates transcription of ECB-dependent genes during the G1/M phase. Genes that contain a ECB (early cell box) element in their transcription regulatory region are transcribed only during G1/M phases. Interacts with the alpha-2 repressor or with the alpha-1 activator thereby regulating the expression of mating-type-specific genes. With ARG80, ARG81 and ARG82, coordinates the expression of arginine anabolic and catabolic genes in response to arginine. The protein is Pheromone receptor transcription factor (MCM1) of Saccharomyces cerevisiae (strain ATCC 204508 / S288c) (Baker's yeast).